Consider the following 270-residue polypeptide: Formamidopyrimidine-DNA glycosylase (270 aa).

Catalysis depends on proline 2, which acts as the Schiff-base intermediate with DNA. The active-site Proton donor is glutamate 3. Lysine 58 acts as the Proton donor; for beta-elimination activity in catalysis. DNA is bound by residues histidine 91, arginine 110, and lysine 151. Residues phenylalanine 236–arginine 270 form an FPG-type zinc finger. The active-site Proton donor; for delta-elimination activity is the arginine 260.

It belongs to the FPG family. As to quaternary structure, monomer. Requires Zn(2+) as cofactor.

The catalysed reaction is Hydrolysis of DNA containing ring-opened 7-methylguanine residues, releasing 2,6-diamino-4-hydroxy-5-(N-methyl)formamidopyrimidine.. The enzyme catalyses 2'-deoxyribonucleotide-(2'-deoxyribose 5'-phosphate)-2'-deoxyribonucleotide-DNA = a 3'-end 2'-deoxyribonucleotide-(2,3-dehydro-2,3-deoxyribose 5'-phosphate)-DNA + a 5'-end 5'-phospho-2'-deoxyribonucleoside-DNA + H(+). Involved in base excision repair of DNA damaged by oxidation or by mutagenic agents. Acts as a DNA glycosylase that recognizes and removes damaged bases. Has a preference for oxidized purines, such as 7,8-dihydro-8-oxoguanine (8-oxoG). Has AP (apurinic/apyrimidinic) lyase activity and introduces nicks in the DNA strand. Cleaves the DNA backbone by beta-delta elimination to generate a single-strand break at the site of the removed base with both 3'- and 5'-phosphates. In Pseudomonas savastanoi pv. phaseolicola (strain 1448A / Race 6) (Pseudomonas syringae pv. phaseolicola (strain 1448A / Race 6)), this protein is Formamidopyrimidine-DNA glycosylase.